A 196-amino-acid chain; its full sequence is ATP-dependent Clp protease proteolytic subunit (196 aa).

The active-site Nucleophile is the S101. The active site involves H126.

Belongs to the peptidase S14 family. In terms of assembly, component of the chloroplastic Clp protease core complex.

Its subcellular location is the plastid. It is found in the chloroplast stroma. It catalyses the reaction Hydrolysis of proteins to small peptides in the presence of ATP and magnesium. alpha-casein is the usual test substrate. In the absence of ATP, only oligopeptides shorter than five residues are hydrolyzed (such as succinyl-Leu-Tyr-|-NHMec, and Leu-Tyr-Leu-|-Tyr-Trp, in which cleavage of the -Tyr-|-Leu- and -Tyr-|-Trp bonds also occurs).. Functionally, cleaves peptides in various proteins in a process that requires ATP hydrolysis. Has a chymotrypsin-like activity. Plays a major role in the degradation of misfolded proteins. In Lepidium virginicum (Virginia pepperweed), this protein is ATP-dependent Clp protease proteolytic subunit.